We begin with the raw amino-acid sequence, 132 residues long: Small ribosomal subunit protein uS8 (132 aa).

The protein belongs to the universal ribosomal protein uS8 family. Part of the 30S ribosomal subunit. Contacts proteins S5 and S12.

Its function is as follows. One of the primary rRNA binding proteins, it binds directly to 16S rRNA central domain where it helps coordinate assembly of the platform of the 30S subunit. This is Small ribosomal subunit protein uS8 from Rhizobium meliloti (strain 1021) (Ensifer meliloti).